A 398-amino-acid chain; its full sequence is Bifunctional enzyme IspD/IspF (398 aa).

The segment at 1 to 234 is 2-C-methyl-D-erythritol 4-phosphate cytidylyltransferase; sequence MTNSPRTAAI…SRLMAALGDI (234 aa). The 2-C-methyl-D-erythritol 2,4-cyclodiphosphate synthase stretch occupies residues 235 to 398; sequence RTGTGYDVHA…LPWGADGLAG (164 aa). A divalent metal cation contacts are provided by Asp-241 and His-243. Residues 241–243 and 267–268 each bind 4-CDP-2-C-methyl-D-erythritol 2-phosphate; these read DVH and HS. His-275 lines the a divalent metal cation pocket. Residues 289 to 291, 365 to 368, Phe-372, and Arg-375 contribute to the 4-CDP-2-C-methyl-D-erythritol 2-phosphate site; these read DIG and TTSE.

This sequence in the N-terminal section; belongs to the IspD/TarI cytidylyltransferase family. IspD subfamily. In the C-terminal section; belongs to the IspF family. The cofactor is a divalent metal cation.

It catalyses the reaction 2-C-methyl-D-erythritol 4-phosphate + CTP + H(+) = 4-CDP-2-C-methyl-D-erythritol + diphosphate. It carries out the reaction 4-CDP-2-C-methyl-D-erythritol 2-phosphate = 2-C-methyl-D-erythritol 2,4-cyclic diphosphate + CMP. Its pathway is isoprenoid biosynthesis; isopentenyl diphosphate biosynthesis via DXP pathway; isopentenyl diphosphate from 1-deoxy-D-xylulose 5-phosphate: step 2/6. It participates in isoprenoid biosynthesis; isopentenyl diphosphate biosynthesis via DXP pathway; isopentenyl diphosphate from 1-deoxy-D-xylulose 5-phosphate: step 4/6. Its function is as follows. Bifunctional enzyme that catalyzes the formation of 4-diphosphocytidyl-2-C-methyl-D-erythritol from CTP and 2-C-methyl-D-erythritol 4-phosphate (MEP) (IspD), and catalyzes the conversion of 4-diphosphocytidyl-2-C-methyl-D-erythritol 2-phosphate (CDP-ME2P) to 2-C-methyl-D-erythritol 2,4-cyclodiphosphate (ME-CPP) with a corresponding release of cytidine 5-monophosphate (CMP) (IspF). The chain is Bifunctional enzyme IspD/IspF from Rhodopseudomonas palustris (strain ATCC BAA-98 / CGA009).